The primary structure comprises 232 residues: Large ribosomal subunit protein uL1 (232 aa).

Belongs to the universal ribosomal protein uL1 family. In terms of assembly, part of the 50S ribosomal subunit.

Binds directly to 23S rRNA. The L1 stalk is quite mobile in the ribosome, and is involved in E site tRNA release. Functionally, protein L1 is also a translational repressor protein, it controls the translation of the L11 operon by binding to its mRNA. In Roseobacter denitrificans (strain ATCC 33942 / OCh 114) (Erythrobacter sp. (strain OCh 114)), this protein is Large ribosomal subunit protein uL1.